The chain runs to 188 residues: Elongation factor P (188 aa).

Lysine 34 carries the post-translational modification N6-(3,6-diaminohexanoyl)-5-hydroxylysine.

The protein belongs to the elongation factor P family. In terms of processing, may be beta-lysylated on the epsilon-amino group of Lys-34 by the combined action of EpmA and EpmB, and then hydroxylated on the C5 position of the same residue by EpmC (if this protein is present). Lysylation is critical for the stimulatory effect of EF-P on peptide-bond formation. The lysylation moiety may extend toward the peptidyltransferase center and stabilize the terminal 3-CCA end of the tRNA. Hydroxylation of the C5 position on Lys-34 may allow additional potential stabilizing hydrogen-bond interactions with the P-tRNA.

Its subcellular location is the cytoplasm. It functions in the pathway protein biosynthesis; polypeptide chain elongation. Functionally, involved in peptide bond synthesis. Alleviates ribosome stalling that occurs when 3 or more consecutive Pro residues or the sequence PPG is present in a protein, possibly by augmenting the peptidyl transferase activity of the ribosome. Modification of Lys-34 is required for alleviation. The chain is Elongation factor P from Actinobacillus succinogenes (strain ATCC 55618 / DSM 22257 / CCUG 43843 / 130Z).